Here is a 376-residue protein sequence, read N- to C-terminus: 5-amino-6-(D-ribitylamino)uracil--L-tyrosine 4-hydroxyphenyl transferase 1 (376 aa).

One can recognise a Radical SAM core domain in the interval 50–275 (VTYVVNRNIN…PGLEDLKVYA (226 aa)). The [4Fe-4S] cluster site is built by cysteine 64, cysteine 68, and cysteine 71.

This sequence belongs to the radical SAM superfamily. CofH family. Consists of two subunits, CofG and CofH. [4Fe-4S] cluster is required as a cofactor.

The catalysed reaction is 5-amino-6-(D-ribitylamino)uracil + L-tyrosine + S-adenosyl-L-methionine = 5-amino-5-(4-hydroxybenzyl)-6-(D-ribitylimino)-5,6-dihydrouracil + 2-iminoacetate + 5'-deoxyadenosine + L-methionine + H(+). The protein operates within cofactor biosynthesis; coenzyme F0 biosynthesis. Functionally, catalyzes the radical-mediated synthesis of 5-amino-5-(4-hydroxybenzyl)-6-(D-ribitylimino)-5,6-dihydrouracil from 5-amino-6-(D-ribitylamino)uracil and L-tyrosine. The chain is 5-amino-6-(D-ribitylamino)uracil--L-tyrosine 4-hydroxyphenyl transferase 1 from Methanosarcina mazei (strain ATCC BAA-159 / DSM 3647 / Goe1 / Go1 / JCM 11833 / OCM 88) (Methanosarcina frisia).